A 347-amino-acid chain; its full sequence is E3 ubiquitin-protein ligase RNF146-B (347 aa).

The RING-type zinc-finger motif lies at C37–R75. Glycyl lysine isopeptide (Lys-Gly) (interchain with G-Cter in ubiquitin) cross-links involve residues K85, K95, K131, and K176. Positions E92–R168 constitute a WWE domain. Disordered regions lie at residues S196–L241 and E257–V347. The span at S203–V217 shows a compositional bias: low complexity. The segment covering S282–D296 has biased composition (acidic residues). Phosphoserine occurs at positions 288 and 292. The span at H304–D322 shows a compositional bias: polar residues.

As to quaternary structure, interacts with poly-ADP-ribosylated AXIN1, AXIN2, BLZF1 and CASC3. Post-translationally, ubiquitinated; autoubiquitinated. Autoubiquitination is enhanced upon poly(ADP-ribose)-binding.

It localises to the cytoplasm. Its subcellular location is the cytosol. It carries out the reaction S-ubiquitinyl-[E2 ubiquitin-conjugating enzyme]-L-cysteine + [acceptor protein]-L-lysine = [E2 ubiquitin-conjugating enzyme]-L-cysteine + N(6)-ubiquitinyl-[acceptor protein]-L-lysine.. It participates in protein modification; protein ubiquitination. E3 ubiquitin-protein ligase that specifically binds poly-ADP-ribosylated proteins and mediates their ubiquitination and subsequent degradation. Acts as an activator of the Wnt signaling pathway by mediating the ubiquitination of poly-ADP-ribosylated AXIN1 and AXIN2, 2 key components of the beta-catenin destruction complex. Acts in cooperation with tankyrase proteins (TNKS and TNKS2), which mediate poly-ADP-ribosylation of target proteins AXIN1, AXIN2, BLZF1, CASC3, TNKS and TNKS2. Recognizes and binds tankyrase-dependent poly-ADP-ribosylated proteins via its WWE domain and mediates their ubiquitination. The chain is E3 ubiquitin-protein ligase RNF146-B (RNF146B) from Bos taurus (Bovine).